The sequence spans 610 residues: UvrABC system protein C (610 aa).

The region spanning 16 to 94 (SQPGVYRMYD…IKLYQPRYNV (79 aa)) is the GIY-YIG domain. The region spanning 204–239 (QQVLTRLIERMEQASQQLKFEDAARYRDQIQAVRQV) is the UVR domain.

Belongs to the UvrC family. Interacts with UvrB in an incision complex.

It localises to the cytoplasm. Functionally, the UvrABC repair system catalyzes the recognition and processing of DNA lesions. UvrC both incises the 5' and 3' sides of the lesion. The N-terminal half is responsible for the 3' incision and the C-terminal half is responsible for the 5' incision. This chain is UvrABC system protein C, found in Photorhabdus laumondii subsp. laumondii (strain DSM 15139 / CIP 105565 / TT01) (Photorhabdus luminescens subsp. laumondii).